The primary structure comprises 257 residues: Probable enoyl-CoA hydratase echA8 (257 aa).

This sequence belongs to the enoyl-CoA hydratase/isomerase family.

It carries out the reaction a (3S)-3-hydroxyacyl-CoA = a (2E)-enoyl-CoA + H2O. The catalysed reaction is a 4-saturated-(3S)-3-hydroxyacyl-CoA = a (3E)-enoyl-CoA + H2O. In terms of biological role, could possibly oxidize fatty acids using specific components. This is Probable enoyl-CoA hydratase echA8 (echA8) from Mycobacterium leprae (strain TN).